The primary structure comprises 285 residues: MKLCGFDVGLDRPFFLIAGPCVIESEQLQMDVAGRLKETTAALGIPFIFKSSFDKANRSSGTSFRGPGREKGLEILAKIRRELNVPVLTDVHTEDDITEAAKVVDVLQTPAFLCRQTDFIRAVAQSGKPVNIKKGQFLAPHDMKNVIDKARAAAREKGLPEDSFMACERGASFGYNNLVSDMRGLAIMRETGAPVVFDATHSVQLPGGQGTSSGGQREMVPVLARAAVAVGVAGLFMETHPDPCNALSDGPNAVPLKHMKALLETLVALDSVTKRNGFLENDFGA.

It belongs to the KdsA family.

The protein localises to the cytoplasm. The catalysed reaction is D-arabinose 5-phosphate + phosphoenolpyruvate + H2O = 3-deoxy-alpha-D-manno-2-octulosonate-8-phosphate + phosphate. Its pathway is carbohydrate biosynthesis; 3-deoxy-D-manno-octulosonate biosynthesis; 3-deoxy-D-manno-octulosonate from D-ribulose 5-phosphate: step 2/3. It functions in the pathway bacterial outer membrane biogenesis; lipopolysaccharide biosynthesis. The protein is 2-dehydro-3-deoxyphosphooctonate aldolase of Paracidovorax citrulli (strain AAC00-1) (Acidovorax citrulli).